Here is a 469-residue protein sequence, read N- to C-terminus: Spliceosome-associated protein CWC27 homolog (469 aa).

S2 bears the N-acetylserine mark. The region spanning 11 to 166 (TNGKVLLKTT…NPHRIKSCEV (156 aa)) is the PPIase cyclophilin-type domain. A compositionally biased stretch (basic and acidic residues) spans 175 to 193 (TPREIKKPKNEKPEEEVKK). Disordered regions lie at residues 175–415 (TPRE…DDEG) and 428–469 (RKVK…KERR). The stretch at 206–229 (SFGEEAEEEEEEVNRVSQSMKGRS) forms a coiled coil. Residues 231–241 (SSHDLLKDDPH) are compositionally biased toward basic and acidic residues. The span at 256–278 (TGDLEDDGEDDSAERDEYMEDDE) shows a compositional bias: acidic residues. 2 stretches are compositionally biased toward basic and acidic residues: residues 302-341 (GDGE…KVEE) and 356-368 (EYRR…EALR). The stretch at 309–371 (ASRSEELRKE…QKYEALRKQQ (63 aa)) forms a coiled coil. The segment covering 384 to 403 (ALLSQFKSKLTQAITETPEN) has biased composition (polar residues). The span at 454 to 469 (RREESKKLLREKKERR) shows a compositional bias: basic and acidic residues.

Belongs to the cyclophilin-type PPIase family. Part of the activated spliceosome B/catalytic step 1 spliceosome, one of the forms of the spliceosome which has a well-formed active site but still cannot catalyze the branching reaction and is composed at least of 52 proteins, the U2, U5 and U6 snRNAs and the pre-mRNA. Recruited during early steps of activated spliceosome B maturation, it is probably one of the first proteins released from this complex as he matures to the spliceosome C complex. Component of the minor spliceosome, which splices U12-type introns.

The protein resides in the nucleus. As part of the spliceosome, plays a role in pre-mRNA splicing. Probable inactive PPIase with no peptidyl-prolyl cis-trans isomerase activity. As a component of the minor spliceosome, involved in the splicing of U12-type introns in pre-mRNAs. In Mus musculus (Mouse), this protein is Spliceosome-associated protein CWC27 homolog.